Consider the following 120-residue polypeptide: Neuromedin-B (120 aa).

The first 29 residues, Met-1–Cys-29, serve as a signal peptide directing secretion. Positions Met-30 to Arg-44 are excised as a propeptide. The residue at position 54 (Met-54) is a Methionine amide. The propeptide occupies Ser-58–Lys-120.

It belongs to the bombesin/neuromedin-B/ranatensin family. Brain, intestine, and ovaries and early embryos (stages 2 and 10).

It is found in the secreted. Functionally, stimulates smooth muscle contraction. The chain is Neuromedin-B (nmb) from Xenopus laevis (African clawed frog).